The following is a 108-amino-acid chain: Large ribosomal subunit protein uL24 (108 aa).

It belongs to the universal ribosomal protein uL24 family. In terms of assembly, part of the 50S ribosomal subunit.

Functionally, one of two assembly initiator proteins, it binds directly to the 5'-end of the 23S rRNA, where it nucleates assembly of the 50S subunit. One of the proteins that surrounds the polypeptide exit tunnel on the outside of the subunit. The sequence is that of Large ribosomal subunit protein uL24 from Mycoplasma genitalium (strain ATCC 33530 / DSM 19775 / NCTC 10195 / G37) (Mycoplasmoides genitalium).